A 113-amino-acid chain; its full sequence is ATP-dependent Clp protease adapter protein ClpS (113 aa).

Residues 1–11 (MTRPTIPPGPP) show a composition bias toward pro residues. 2 disordered regions span residues 1 to 24 (MTRP…ERTE) and 92 to 113 (TAHA…SEGE).

Belongs to the ClpS family. Binds to the N-terminal domain of the chaperone ClpA.

Involved in the modulation of the specificity of the ClpAP-mediated ATP-dependent protein degradation. The polypeptide is ATP-dependent Clp protease adapter protein ClpS (Deinococcus radiodurans (strain ATCC 13939 / DSM 20539 / JCM 16871 / CCUG 27074 / LMG 4051 / NBRC 15346 / NCIMB 9279 / VKM B-1422 / R1)).